The chain runs to 876 residues: Alanine--tRNA ligase (876 aa).

His-564, His-568, Cys-666, and His-670 together coordinate Zn(2+).

The protein belongs to the class-II aminoacyl-tRNA synthetase family. In terms of assembly, homotetramer. It depends on Zn(2+) as a cofactor.

The protein resides in the cytoplasm. The catalysed reaction is tRNA(Ala) + L-alanine + ATP = L-alanyl-tRNA(Ala) + AMP + diphosphate. Functionally, catalyzes the attachment of alanine to tRNA(Ala) in a two-step reaction: alanine is first activated by ATP to form Ala-AMP and then transferred to the acceptor end of tRNA(Ala). Also edits incorrectly charged Ser-tRNA(Ala) and Gly-tRNA(Ala) via its editing domain. This Salmonella paratyphi B (strain ATCC BAA-1250 / SPB7) protein is Alanine--tRNA ligase.